Reading from the N-terminus, the 40-residue chain is Unknown protein from spot 207 of 2D-PAGE of etiolated coleoptile (40 aa).

The protein belongs to the GST superfamily. HSP26 family.

The sequence is that of Unknown protein from spot 207 of 2D-PAGE of etiolated coleoptile from Zea mays (Maize).